Consider the following 1166-residue polypeptide: Tectonin beta-propeller repeat-containing protein 1 (1166 aa).

TECPR repeat units lie at residues 209 to 240 (LSVW…SLVD), 254 to 285 (DLIW…SIVE), 301 to 332 (SVVW…IEMV), and 344 to 376 (DQVW…KAIV). Ser-386, Ser-388, Ser-391, Ser-413, and Ser-418 each carry phosphoserine. The interval 403 to 492 (VRGSGTESAP…PAPTPAELPW (90 aa)) is disordered. The span at 407 to 418 (GTESAPSDTDAS) shows a compositional bias: polar residues. A compositionally biased stretch (basic and acidic residues) spans 420–436 (EVERQGPERSLPKESLD). The span at 437-446 (NSRNLKGSSS) shows a compositional bias: polar residues. The segment covering 447-456 (KGHESTRNTE) has biased composition (basic and acidic residues). In terms of domain architecture, PH spans 616-722 (KTGALQWWCD…WLTLLSLSCC (107 aa)). A TECPR 5 repeat occupies 734–761 (QAIWSVTCKGDIFVSEPSPDLEAHEHLL). Residue Ser-943 is modified to Phosphoserine. 4 TECPR repeats span residues 958–989 (IALW…LHVG), 1003–1034 (YQVW…YHIP), 1049–1080 (TSVY…EHVS), and 1092–1132 (DQVW…DYGI). The interval 1147 to 1166 (RAPRNMSRDQEAHGPGPVCC) is disordered.

The protein belongs to the TECPR1 family. As to quaternary structure, interacts with ATG5; the interaction is direct. Interacts with WIPI2. Interacts with the ATG5-ATG12 conjugate, the interaction is however mutually exclusive with ATG16, since it does not interact with ATG12-ATG5-ATG16 complex.

It is found in the cytoplasmic vesicle. It localises to the autophagosome membrane. The protein localises to the lysosome membrane. Functionally, tethering factor involved in autophagy. Involved in autophagosome maturation by promoting the autophagosome fusion with lysosomes: acts by associating with both the ATG5-ATG12 conjugate and phosphatidylinositol-3-phosphate (PtdIns(3)P) present at the surface of autophagosomes. Also involved in selective autophagy against bacterial pathogens, by being required for phagophore/preautophagosomal structure biogenesis and maturation. The chain is Tectonin beta-propeller repeat-containing protein 1 (Tecpr1) from Rattus norvegicus (Rat).